Consider the following 644-residue polypeptide: Complement component C1q receptor (644 aa).

Residues 1–22 form the signal peptide; sequence MAISTGLFLLLGLLGQPWAGAA. Topologically, residues 23-572 are extracellular; that stretch reads ADSQAVVCEG…SAHSDTDGQN (550 aa). The C-type lectin domain maps to 31-173; the sequence is EGTACYTAHW…CGTPEAPGNS (143 aa). An N-linked (GlcNAc...) asparagine glycan is attached at N102. Cystine bridges form between C140-C164, C261-C272, C268-C282, C284-C297, C303-C314, C308-C325, C327-C340, C346-C355, C351-C364, C366-C380, C386-C397, C393-C406, C408-C422, C428-C440, C436-C449, and C451-C464. EGF-like domains follow at residues 257–298 and 299–341; these read PKFG…VTCA and SRNP…VHCV. A glycan (N-linked (GlcNAc...) asparagine) is linked at N322. One can recognise an EGF-like 3; calcium-binding domain in the interval 342-381; it reads DIDECQDSPCAQDCVNTLGSFHCECWVGYQPSGPKEEACE. Residues 382-423 form the EGF-like 4; calcium-binding domain; the sequence is DVDECAAANSPCAQGCINTDGSFYCSCKEGYIVSGEDSTQCE. The EGF-like 5; calcium-binding domain occupies 424-465; it reads DIDECSDARGNPCDSLCFNTDGSFRCGCPPGWELAPNGVFCS. Residues 473 to 508 are disordered; sequence LPARPPQKEDNDDRKESTMPPTEMPSSPSGSKDVSN. A compositionally biased stretch (basic and acidic residues) spans 478–489; it reads PQKEDNDDRKES. Low complexity predominate over residues 490 to 501; sequence TMPPTEMPSSPS. The helical transmembrane segment at 573–593 threads the bilayer; sequence LLLFYILGTVVAISLLLVLAL. At 594–644 the chain is on the cytoplasmic side; it reads GILIYHKRRAKKEEIKEKKPQNAADSYSWVPERAESQAPENQYSPTPGTDC. A disordered region spans residues 605 to 644; sequence KEEIKEKKPQNAADSYSWVPERAESQAPENQYSPTPGTDC. A Phosphoserine modification is found at S619. Y620 and Y636 each carry phosphotyrosine. Over residues 631–644 the composition is skewed to polar residues; it reads APENQYSPTPGTDC.

Homodimer. Interacts with C1QBP; the association may represent a cell surface C1q receptor. Interacts with surfactant protein A/SFTPA1. Interacts with multimerin-2/MMRN2. Interacts with DAG1; this interaction plays an important role in endothelial cell migration. Interacts with CBL. Interacts with IGFBP7. Interacts with VEGFR2. N- and O-glycosylated. In terms of processing, phosphorylated on Tyr-620 and Tyr-636 by SRC; these phosphorylations promote endothelial cell adhesion and migration. In terms of tissue distribution, expressed in lung, heart and bone marrow. Expressed at lower level in ovary, whole embryo and fetal liver. Not detected in brain, adult liver or thymus. Highly expressed in peritoneal cavity and bone marrow macrophages. Not detected in epithelial cells.

The protein resides in the cell membrane. Its function is as follows. Cell surface receptor that plays a role in various physiological processes including inflammation, phagocytosis, and cell adhesion. Plays a role in phagocytosis and enhances the uptake of apoptotic cells and immune complexes by acting as a receptor for defense collagens including surfactant protein A/SFTPA1, C1q, and mannose-binding lectin (MBL2). Plays a role in the regulation of endothelial cell function and adhesion by activating angiogenesis. Mechanistically, exerts its angiogenic function by associating with beta-dystroglycan, leading to SRC-dependent phosphorylation and subsequent recruitment of CBL. In turn, CBL provides a docking site for downstream signaling components, such as CRKL to enhance cell migration. Participates in angiogenesis also by acting as a receptor for the ECM pan-endothelial glycoprotein multimerin-2/MMRN2 and IGFBP7 ligands. Both ligands play a non-redundant role in CD93-mediated endothelial cell function. Acts as a key regulator of endothelial barrier function through modulating VEGFR2 function. This chain is Complement component C1q receptor (Cd93), found in Mus musculus (Mouse).